Here is a 709-residue protein sequence, read N- to C-terminus: Protein SOSEKI 3 (709 aa).

The tract at residues 8 to 101 (SSVQVLYQLS…YVLRASELFD (94 aa)) is DIX-like oligomerization domain. Disordered regions lie at residues 242–266 (LHTP…AKRM), 315–344 (RDGR…AEQS), 358–393 (GGSS…KTPC), 411–439 (PSPA…NRPS), and 506–560 (DSPT…DTKP). Residues 329 to 342 (ELREVQNEKEKEAE) are compositionally biased toward basic and acidic residues. The segment covering 417 to 436 (NKAHSSLDRQEIPPQEECKN) has biased composition (basic and acidic residues). Over residues 529 to 544 (VKTSNSLPRVKTTTSP) the composition is skewed to polar residues. Residues 663 to 692 (ILQECSTCGRTFKPDSLQVHMRGCHPPQYA) form a C2HC/C3H-type zinc finger. The Zn(2+) site is built by Cys-667, Cys-670, His-682, and Cys-686.

Belongs to the SOSEKI family. In terms of assembly, homodimer. Forms long polymer filaments with other SOKs proteins polymers crucial for polar localization and biological activity. The cofactor is Zn(2+).

Its subcellular location is the cell membrane. SOSEKI proteins locally interpret global polarity cues and can influence cell division orientation to coordinate cell polarization relative to body axes. The protein is Protein SOSEKI 3 of Physcomitrium patens (Spreading-leaved earth moss).